A 258-amino-acid chain; its full sequence is Chymotrypsin-2 (258 aa).

Residues 1-17 (MLRKVFAVVSVLLVVSA) form the signal peptide. The propeptide at 18–32 (AKVTKLVLDDHYVNR) is activation peptide. The region spanning 33–255 (VVGGEVAKNG…YHEWVRTTMA (223 aa)) is the Peptidase S1 domain. Cys59 and Cys75 are joined by a disulfide. Active-site charge relay system residues include His74 and Asp119. Disulfide bonds link Cys182–Cys198 and Cys208–Cys232. The active-site Charge relay system is the Ser212.

This sequence belongs to the peptidase S1 family. As to expression, after blood feeding, expression is induced in the midgut epithelium, followed by secretion into the midgut lumen.

It is found in the secreted. The catalysed reaction is Preferential cleavage: Tyr-|-Xaa, Trp-|-Xaa, Phe-|-Xaa, Leu-|-Xaa.. The protein is Chymotrypsin-2 (CHYM2) of Anopheles gambiae (African malaria mosquito).